The chain runs to 376 residues: Mannosyl phosphorylinositol ceramide synthase CSH1 (376 aa).

2 helical membrane-spanning segments follow: residues 7–27 (ILIIANIALLISIIHYTFDLL) and 274–294 (ILSCVVTGFIFGFFILYGEFT). Residues 331–351 (NKEKRRNPTRHEYNSRGKRLR) form a disordered region. Serine 354 carries the post-translational modification Phosphoserine.

The protein belongs to the glycosyltransferase 32 family. As to quaternary structure, heterodimer of CSH1 and CSG2.

The protein resides in the vacuole membrane. The catalysed reaction is a 1D-myo-inositol-1-phospho-N-[(R)-2-hydroxy-very-long-chain fatty acyl]-(R)-4-hydroxysphingoid base + GDP-alpha-D-mannose = an alpha-D-mannosyl-(1&lt;-&gt;6)-1D-myo-inositol-1-phospho-N-[(R)-2-hydroxy-very-long-chain fatty acyl]-(R)-4-hydroxysphingoid base + GDP + H(+). Its function is as follows. Involved in the synthesis of mannosyl phosphorylinositol ceramide. Catalyzes the addition of mannosyl to phosphorylinositol ceramide. The sequence is that of Mannosyl phosphorylinositol ceramide synthase CSH1 from Saccharomyces cerevisiae (strain ATCC 204508 / S288c) (Baker's yeast).